The following is a 149-amino-acid chain: MKTIEVKILDPRMQEQLPAYATAGSAGLDLRACLDAPITIKPGETHLVPTGLAIHLADPGYAAMILPRSGMGHKHGIVLGNLVGLIDSDYQGQLMVSTWNRGQTEFTLNPMERLAQLVIVPVLQVGFNVVEEFDTSERGIGGFGSTGKH.

Residues 68–70 (RSG), N81, 85–87 (LID), and M95 each bind substrate.

This sequence belongs to the dUTPase family. The cofactor is Mg(2+).

The enzyme catalyses dUTP + H2O = dUMP + diphosphate + H(+). The protein operates within pyrimidine metabolism; dUMP biosynthesis; dUMP from dCTP (dUTP route): step 2/2. This enzyme is involved in nucleotide metabolism: it produces dUMP, the immediate precursor of thymidine nucleotides and it decreases the intracellular concentration of dUTP so that uracil cannot be incorporated into DNA. This is Deoxyuridine 5'-triphosphate nucleotidohydrolase from Janthinobacterium sp. (strain Marseille) (Minibacterium massiliensis).